The primary structure comprises 69 residues: Mitotic-spindle organizing protein 1 (69 aa).

This sequence belongs to the MOZART1 family. In terms of assembly, part of the gamma-tubulin complex.

The protein localises to the cytoplasm. It localises to the cytoskeleton. The protein resides in the microtubule organizing center. Its subcellular location is the spindle. Functionally, required for gamma-tubulin complex recruitment to the microtubule organizing centers (MTOCs). The protein is Mitotic-spindle organizing protein 1 of Picea sitchensis (Sitka spruce).